Consider the following 239-residue polypeptide: MAVRINAMAVTFVAHALAVIAAIMVLVWSISYRGGLAWEATNKNLIFNLHPVLMLIGFIILGGEAIISYKSLPLEKPVKKLIHLILHAIALALGIFGICAAFKNHNESHIPNLYSLHSWIGIGVISLYGFQWVYSFIVFFFPGGSTNLKSGLLPWHAMLGLFVYILAVGNAALGFLEKLTFLENGGLDKYGSEAFLINFTAIITILFGAFVVLTASAESPSPSPSVSNDDSVDFSYSAI.

Topologically, residues 1–7 are cytoplasmic; that stretch reads MAVRINA. The chain crosses the membrane as a helical span at residues 8–28; that stretch reads MAVTFVAHALAVIAAIMVLVW. A Cytochrome b561 domain is found at 13 to 216; sequence VAHALAVIAA…FGAFVVLTAS (204 aa). Topologically, residues 29 to 45 are lumenal; it reads SISYRGGLAWEATNKNL. The chain crosses the membrane as a helical span at residues 46–66; that stretch reads IFNLHPVLMLIGFIILGGEAI. His-50 serves as a coordination point for heme b. Residues 67-81 are Cytoplasmic-facing; sequence ISYKSLPLEKPVKKL. Residues 82–102 form a helical membrane-spanning segment; that stretch reads IHLILHAIALALGIFGICAAF. Heme b is bound by residues His-83 and His-117. Over 103–119 the chain is Lumenal; sequence KNHNESHIPNLYSLHSW. Residues 120-140 traverse the membrane as a helical segment; it reads IGIGVISLYGFQWVYSFIVFF. The Cytoplasmic segment spans residues 141–155; the sequence is FPGGSTNLKSGLLPW. Residue His-156 coordinates heme b. The chain crosses the membrane as a helical span at residues 156–176; the sequence is HAMLGLFVYILAVGNAALGFL. Over 177 to 193 the chain is Lumenal; it reads EKLTFLENGGLDKYGSE. Residues 194–214 traverse the membrane as a helical segment; it reads AFLINFTAIITILFGAFVVLT. Over 215-239 the chain is Cytoplasmic; sequence ASAESPSPSPSVSNDDSVDFSYSAI. The segment at 217–239 is disordered; it reads AESPSPSPSVSNDDSVDFSYSAI. A compositionally biased stretch (low complexity) spans 224–239; the sequence is PSVSNDDSVDFSYSAI.

As to quaternary structure, homodimer. Requires heme b as cofactor. As to expression, expressed in roots, seedlings and leaves. Lower expression in flowers. Expressed in the L1 layer of the shoot apex, in the epidermis of leaf primordia and young leaves and in vascular bundles. In the differentiation zone of the root, detected in the pericycle and in the epidermis, but not in the cortex. Strongly expressed in the lateral part of the root cap and in the epidermis of the root tip, but not in the meristematic tissue. Not expressed in lateral roots. In mature embryos, expressed in the epidermis, cotyledon tips and root tips.

The protein localises to the vacuole membrane. The enzyme catalyses Fe(3+)(out) + L-ascorbate(in) = monodehydro-L-ascorbate radical(in) + Fe(2+)(out) + H(+). Its function is as follows. Two-heme-containing cytochrome. Catalyzes ascorbate-dependent trans-membrane ferric-chelate reduction. Able to use dihydrolipoic acid (DHLA) as an alternative substrate to ascorbate. The chain is Transmembrane ascorbate ferrireductase 1 (CYB561A) from Arabidopsis thaliana (Mouse-ear cress).